Here is a 29-residue protein sequence, read N- to C-terminus: Cytochrome b6-f complex subunit 8 (29 aa).

A helical transmembrane segment spans residues 3-23 (IITFGWVAVAAFFALSIAFVV).

The protein belongs to the PetN family. As to quaternary structure, the 4 large subunits of the cytochrome b6-f complex are cytochrome b6, subunit IV (17 kDa polypeptide, PetD), cytochrome f and the Rieske protein, while the 4 small subunits are PetG, PetL, PetM and PetN. The complex functions as a dimer.

The protein localises to the cellular thylakoid membrane. Its function is as follows. Component of the cytochrome b6-f complex, which mediates electron transfer between photosystem II (PSII) and photosystem I (PSI), cyclic electron flow around PSI, and state transitions. This chain is Cytochrome b6-f complex subunit 8, found in Synechococcus sp. (strain JA-3-3Ab) (Cyanobacteria bacterium Yellowstone A-Prime).